A 206-amino-acid polypeptide reads, in one-letter code: Large ribosomal subunit protein uL4 (206 aa).

The interval 44-80 (KRAGTHSVKTRSTISGGGAKPWRQKGTGRARSGSNRS) is disordered.

This sequence belongs to the universal ribosomal protein uL4 family. In terms of assembly, part of the 50S ribosomal subunit.

Its function is as follows. One of the primary rRNA binding proteins, this protein initially binds near the 5'-end of the 23S rRNA. It is important during the early stages of 50S assembly. It makes multiple contacts with different domains of the 23S rRNA in the assembled 50S subunit and ribosome. Functionally, forms part of the polypeptide exit tunnel. The chain is Large ribosomal subunit protein uL4 from Oleidesulfovibrio alaskensis (strain ATCC BAA-1058 / DSM 17464 / G20) (Desulfovibrio alaskensis).